A 66-amino-acid chain; its full sequence is Large ribosomal subunit protein uL29 (66 aa).

The protein belongs to the universal ribosomal protein uL29 family.

The polypeptide is Large ribosomal subunit protein uL29 (Thermosipho africanus (strain TCF52B)).